We begin with the raw amino-acid sequence, 291 residues long: Phosphatidylserine decarboxylase proenzyme 2 (291 aa).

Active-site charge relay system; for autoendoproteolytic cleavage activity residues include aspartate 112 and serine 251. The active-site Schiff-base intermediate with substrate; via pyruvic acid; for decarboxylase activity is the serine 251. Residue serine 251 is modified to Pyruvic acid (Ser); by autocatalysis.

It belongs to the phosphatidylserine decarboxylase family. PSD-B subfamily. Prokaryotic type II sub-subfamily. As to quaternary structure, heterodimer of a large membrane-associated beta subunit and a small pyruvoyl-containing alpha subunit. The cofactor is pyruvate. In terms of processing, is synthesized initially as an inactive proenzyme. Formation of the active enzyme involves a self-maturation process in which the active site pyruvoyl group is generated from an internal serine residue via an autocatalytic post-translational modification. Two non-identical subunits are generated from the proenzyme in this reaction, and the pyruvate is formed at the N-terminus of the alpha chain, which is derived from the carboxyl end of the proenzyme. The autoendoproteolytic cleavage occurs by a canonical serine protease mechanism, in which the side chain hydroxyl group of the serine supplies its oxygen atom to form the C-terminus of the beta chain, while the remainder of the serine residue undergoes an oxidative deamination to produce ammonia and the pyruvoyl prosthetic group on the alpha chain. During this reaction, the Ser that is part of the protease active site of the proenzyme becomes the pyruvoyl prosthetic group, which constitutes an essential element of the active site of the mature decarboxylase.

It is found in the cell membrane. It catalyses the reaction a 1,2-diacyl-sn-glycero-3-phospho-L-serine + H(+) = a 1,2-diacyl-sn-glycero-3-phosphoethanolamine + CO2. It functions in the pathway phospholipid metabolism; phosphatidylethanolamine biosynthesis; phosphatidylethanolamine from CDP-diacylglycerol: step 2/2. Catalyzes the formation of phosphatidylethanolamine (PtdEtn) from phosphatidylserine (PtdSer). In Clostridium acetobutylicum (strain ATCC 824 / DSM 792 / JCM 1419 / IAM 19013 / LMG 5710 / NBRC 13948 / NRRL B-527 / VKM B-1787 / 2291 / W), this protein is Phosphatidylserine decarboxylase proenzyme 2.